Here is a 204-residue protein sequence, read N- to C-terminus: E2 ubiquitin-conjugating enzyme PEX4 (204 aa).

The UBC core domain occupies Ser2–Ile196. Cys133 (glycyl thioester intermediate) is an active-site residue.

Belongs to the ubiquitin-conjugating enzyme family.

The protein resides in the peroxisome membrane. The catalysed reaction is S-ubiquitinyl-[E1 ubiquitin-activating enzyme]-L-cysteine + [E2 ubiquitin-conjugating enzyme]-L-cysteine = [E1 ubiquitin-activating enzyme]-L-cysteine + S-ubiquitinyl-[E2 ubiquitin-conjugating enzyme]-L-cysteine.. It functions in the pathway protein modification; protein ubiquitination. Functionally, E2 ubiquitin-conjugating enzyme involved in peroxisome biosynthesis. Acts late in peroxisomal matrix protein import, after matrix protein translocation. Required for both monoubiquitination and polyubiquitination of coreceptor PEX20. polyubiquitination of PEX20 at conserved lysine 'Lys-19' near the N-terminus leads to its and proteasomal degradation, whereas a monoubiquitination at the conserved cysteine 'Cys-8' is essential for its recycling. The protein is E2 ubiquitin-conjugating enzyme PEX4 of Komagataella phaffii (strain GS115 / ATCC 20864) (Yeast).